The sequence spans 557 residues: Urease subunit alpha (557 aa).

The region spanning 130–557 is the Urease domain; sequence GFIDTHIHWV…LPLTQLYFIY (428 aa). 3 residues coordinate Ni(2+): His-135, His-137, and Lys-217. Lys-217 is subject to N6-carboxylysine. His-219 provides a ligand contact to substrate. Ni(2+) contacts are provided by His-246 and His-272. The Proton donor role is filled by His-320. Asp-360 provides a ligand contact to Ni(2+).

This sequence belongs to the metallo-dependent hydrolases superfamily. Urease alpha subunit family. As to quaternary structure, heterohexamer of 3 UreC (alpha) and 3 UreAB (gamma/beta) subunits. Ni cation serves as cofactor. In terms of processing, carboxylation allows a single lysine to coordinate two nickel ions.

Its subcellular location is the cytoplasm. It catalyses the reaction urea + 2 H2O + H(+) = hydrogencarbonate + 2 NH4(+). It functions in the pathway nitrogen metabolism; urea degradation; CO(2) and NH(3) from urea (urease route): step 1/1. In Sulfurisphaera tokodaii (strain DSM 16993 / JCM 10545 / NBRC 100140 / 7) (Sulfolobus tokodaii), this protein is Urease subunit alpha.